The chain runs to 371 residues: MRKIRVVVIDDSAYSRRAITKMLESMPEVEVIGYATDGEEGIRKIIDLKPDLVTLDLEMPRMDGFTLLRIVMEYSPTAVIVISSRSEDEKVFRALELGAVDFVAKPTKGVSEEILTIREDLHRKVRGVIHLNLAGIVRREREQERASVAAGRRTSGSAPYAKAAVRTESTAPRPAGRLEVVAIGASTGGPPALQRILCALPGAFPQAVVVSQHMPAGFTRTFAERLNRLSPLEICEAADGDEVRAGRVLIAPGGHNMVFERQGSEVRARIVKPGTDDRYVPSVDAMLLSCAEVFGPRTLGVVLTGMGNDGSKGVAAINRAGGQTLAEAEETAVVFGMPKEAIATGVVDKIVSLDRMSREIIQRCGLLSDVD.

In terms of domain architecture, Response regulatory spans 5-120; sequence RVVVIDDSAY…SEEILTIRED (116 aa). Position 56 is a 4-aspartylphosphate (D56). The CheB-type methylesterase domain maps to 174–362; the sequence is PAGRLEVVAI…LDRMSREIIQ (189 aa). Active-site residues include S186, H213, and D309.

This sequence belongs to the CheB family. In terms of processing, phosphorylated by CheA. Phosphorylation of the N-terminal regulatory domain activates the methylesterase activity.

It localises to the cytoplasm. The enzyme catalyses [protein]-L-glutamate 5-O-methyl ester + H2O = L-glutamyl-[protein] + methanol + H(+). It catalyses the reaction L-glutaminyl-[protein] + H2O = L-glutamyl-[protein] + NH4(+). Its function is as follows. Involved in chemotaxis. Part of a chemotaxis signal transduction system that modulates chemotaxis in response to various stimuli. Catalyzes the demethylation of specific methylglutamate residues introduced into the chemoreceptors (methyl-accepting chemotaxis proteins or MCP) by CheR. Also mediates the irreversible deamidation of specific glutamine residues to glutamic acid. The protein is Protein-glutamate methylesterase/protein-glutamine glutaminase 3 of Geobacter sulfurreducens (strain ATCC 51573 / DSM 12127 / PCA).